A 498-amino-acid chain; its full sequence is Mitogen-activated protein kinase 15 (498 aa).

Positions 13–304 constitute a Protein kinase domain; the sequence is YKIEEVIGKG…AEEALADPYF (292 aa). ATP is bound by residues 19–27 and K42; that span reads IGKGSYGVV. D139 serves as the catalytic Proton acceptor. The residue at position 175 (T175) is a Phosphothreonine. The TXY motif lies at 175–177; sequence TDY. Y177 bears the Phosphotyrosine mark. 2 disordered regions span residues 388 to 411 and 470 to 498; these read STAA…SDDR and STAE…GSYP. Residues 486-498 show a composition bias toward polar residues; the sequence is LATNTVSPRGSYP.

This sequence belongs to the protein kinase superfamily. CMGC Ser/Thr protein kinase family. MAP kinase subfamily. Dually phosphorylated on Thr-175 and Tyr-177, which activates the enzyme.

It carries out the reaction L-seryl-[protein] + ATP = O-phospho-L-seryl-[protein] + ADP + H(+). The catalysed reaction is L-threonyl-[protein] + ATP = O-phospho-L-threonyl-[protein] + ADP + H(+). Activated by threonine and tyrosine phosphorylation. The protein is Mitogen-activated protein kinase 15 (MPK15) of Oryza sativa subsp. japonica (Rice).